The primary structure comprises 36 residues: Delta-amaurobitoxin-Pl1c (36 aa).

Disulfide bonds link Cys-3–Cys-19, Cys-10–Cys-24, Cys-18–Cys-34, and Cys-26–Cys-32.

In terms of tissue distribution, expressed by the venom gland.

It localises to the secreted. Functionally, binds at site 4 of sodium channels (Nav) and inhibits the fast inactivation of cockroach channels. This toxin is active only on insects. Has a potent activity against S.litura larvae. The protein is Delta-amaurobitoxin-Pl1c of Pireneitega luctuosa (Tangled nest spider).